A 1237-amino-acid chain; its full sequence is Phosphorylase b kinase regulatory subunit alpha, skeletal muscle isoform (1237 aa).

4 positions are modified to phosphoserine: S629, S729, S735, and S758. The segment at L810–L840 is calmodulin-binding. S972 carries the phosphoserine; by autocatalysis modification. A Phosphoserine modification is found at S981. Phosphoserine; by autocatalysis is present on residues S985 and S1007. S1018 bears the Phosphoserine; by PKA mark. Phosphoserine occurs at positions 1020, 1023, and 1030. Positions T1021 to Q1069 are disordered. A compositionally biased stretch (low complexity) spans S1042 to G1056. Residues S1060–S1100 are calmodulin-binding. Position 1127 is a phosphoserine (S1127). A lipid anchor (S-farnesyl cysteine) is attached at C1234.

It belongs to the phosphorylase b kinase regulatory chain family. In terms of assembly, hexadecamer of 4 heterotetramers, each composed of alpha, beta, gamma, and delta subunits. Alpha (PHKA1 or PHKA2) and beta (PHKB) are regulatory subunits, gamma (PHKG1 or PHKG2) is the catalytic subunit, and delta is calmodulin. Post-translationally, phosphorylation of Ser-1018 by PKA stimulates the dephosphorylation of the beta subunit and, thus, reverses the initial stimulation of PHK by the faster beta-subunit phosphorylation by PKA, that occurs in muscle in response to adrenaline. In terms of processing, cys-1234 is farnesylated, but the C-terminal tripeptide is not removed and the cysteine carboxyl is not methylated. Isoform 1 predominates in muscle, heart, brain and testis. Isoforms 1 and 2 are expressed in similar quantities in the other tissues. Isoform 3 is highly expressed in slow muscle and heart.

Its subcellular location is the cell membrane. Its pathway is glycan biosynthesis; glycogen metabolism. By phosphorylation of various serine residues and by calcium. In terms of biological role, phosphorylase b kinase catalyzes the phosphorylation of serine in certain substrates, including troponin I. The alpha chain may bind calmodulin. This Oryctolagus cuniculus (Rabbit) protein is Phosphorylase b kinase regulatory subunit alpha, skeletal muscle isoform (PHKA1).